The primary structure comprises 1416 residues: DNA-directed RNA polymerase subunit beta' (1416 aa).

Zn(2+) is bound by residues C60, C62, C75, and C78. Mg(2+) is bound by residues D449, D451, and D453. Residues C781, C855, C862, and C865 each coordinate Zn(2+).

Belongs to the RNA polymerase beta' chain family. In terms of assembly, the RNAP catalytic core consists of 2 alpha, 1 beta, 1 beta' and 1 omega subunit. When a sigma factor is associated with the core the holoenzyme is formed, which can initiate transcription. Mg(2+) is required as a cofactor. Requires Zn(2+) as cofactor.

It catalyses the reaction RNA(n) + a ribonucleoside 5'-triphosphate = RNA(n+1) + diphosphate. Functionally, DNA-dependent RNA polymerase catalyzes the transcription of DNA into RNA using the four ribonucleoside triphosphates as substrates. This Treponema pallidum (strain Nichols) protein is DNA-directed RNA polymerase subunit beta'.